We begin with the raw amino-acid sequence, 854 residues long: Protein asteroid (854 aa).

The disordered stretch occupies residues 368–427; it reads SEEECSDDEHSSSSDEKFSDVEEGEDQEEADNQDEEQQEENQDVDSGDEEEEEADEGLEL. A compositionally biased stretch (basic and acidic residues) spans 375–387; that stretch reads DEHSSSSDEKFSD. Acidic residues predominate over residues 388-427; that stretch reads VEEGEDQEEADNQDEEQQEENQDVDSGDEEEEEADEGLEL.

This sequence belongs to the asteroid family. In terms of tissue distribution, expressed in the proliferative tissues of embryos and in the mitotically active tissue anterior to the morphogenetic furrow in eye imaginal disks.

May function in EGF receptor signaling. May play a role in compound eye morphogenesis. This chain is Protein asteroid (ast), found in Drosophila melanogaster (Fruit fly).